We begin with the raw amino-acid sequence, 273 residues long: DNA repair protein RecO (273 aa).

Residues 250 to 273 form a disordered region; it reads NVGQNPSGKDDLNERRDVDGTGES. Basic and acidic residues predominate over residues 257 to 273; it reads GKDDLNERRDVDGTGES.

It belongs to the RecO family.

Functionally, involved in DNA repair and RecF pathway recombination. This Desulfitobacterium hafniense (strain Y51) protein is DNA repair protein RecO.